Reading from the N-terminus, the 99-residue chain is A-type ATP synthase subunit F (99 aa).

It belongs to the V-ATPase F subunit family. Has multiple subunits with at least A(3), B(3), C, D, E, F, H, I and proteolipid K(x).

It is found in the cell membrane. Its function is as follows. Component of the A-type ATP synthase that produces ATP from ADP in the presence of a proton gradient across the membrane. The sequence is that of A-type ATP synthase subunit F from Methanococcus maripaludis (strain DSM 14266 / JCM 13030 / NBRC 101832 / S2 / LL).